The primary structure comprises 369 residues: Glutamate 5-kinase (369 aa).

K9 lines the ATP pocket. The substrate site is built by S49, D136, and N148. Residues T168–D169 and T210–K216 contribute to the ATP site. Residues Q275–W355 enclose the PUA domain.

Belongs to the glutamate 5-kinase family.

It is found in the cytoplasm. The enzyme catalyses L-glutamate + ATP = L-glutamyl 5-phosphate + ADP. The protein operates within amino-acid biosynthesis; L-proline biosynthesis; L-glutamate 5-semialdehyde from L-glutamate: step 1/2. In terms of biological role, catalyzes the transfer of a phosphate group to glutamate to form L-glutamate 5-phosphate. The polypeptide is Glutamate 5-kinase (Streptococcus pneumoniae (strain ATCC 700669 / Spain 23F-1)).